The chain runs to 281 residues: MANGAEDVVFCRGTGQSDDSDIWDDTALIKAYDKAVASFKNALKGEDGATPQENDNPGKKRKNNKKNKSRKRCNAAPDKEWQVGDSCYAFWSEDGNLYTATITSVDQEKGTCVVFYTDYGNEEEQNLSDLLTEPPDMDEDALKTANVKETESSTEESDRSFTPQKSGHAKHKSKSNFPMGPPSWFPSFPPGPPPPPPHFKKMDGRRGEGPGPSFPGWPPMIPLGPPMIPPPPPMSPDFGEDDEALGSMLISWYMSGYHTGYYMGLRQGRKEAAASKKSHRK.

Disordered regions lie at residues 1 to 20 (MANG…SDDS) and 42 to 77 (ALKG…NAAP). T14 is subject to Phosphothreonine. 2 positions are modified to phosphoserine: S17 and S20. A compositionally biased stretch (basic residues) spans 59-73 (KKRKNNKKNKSRKRC). Positions 80 to 140 (EWQVGDSCYA…LTEPPDMDED (61 aa)) constitute a Tudor domain. Positions 145–159 (ANVKETESSTEESDR) are enriched in basic and acidic residues. Positions 145–242 (ANVKETESST…PMSPDFGEDD (98 aa)) are disordered. Pro residues-rich tracts occupy residues 179 to 197 (MGPP…PPPP) and 212 to 235 (PSFP…PPMS). Residues 225-252 (PPMIPPPPPMSPDFGEDDEALGSMLISW) are P2 (binding site for SNRPB). The segment at 264–279 (GLRQGRKEAAASKKSH) is required for interaction with SYNCRIP.

This sequence belongs to the SMN family. As to quaternary structure, homodimer. Component of an import snRNP complex composed of kpnb1, rnut1, smn1 and znf259. Part of the core SMN complex that contains smn1, gemin2/sip1, ddx20/gemin3, gemin4, gemin5, gemin6, gemin7, gemin8 and strap/unrip. Interacts with ddx20, fbl, nola1, rnut1, syncrip and with several spliceosomal snRNP core Sm proteins, including snrpb, snrpd1, snrpd2, snrpd3, snrpe and ilf3. Interacts with elavl4.

Its subcellular location is the nucleus. The protein localises to the gem. It localises to the cajal body. It is found in the cytoplasm. The protein resides in the cytoplasmic granule. Its subcellular location is the perikaryon. The protein localises to the cell projection. It localises to the neuron projection. It is found in the myofibril. The protein resides in the sarcomere. Its subcellular location is the z line. In terms of biological role, the SMN complex plays an essential role in spliceosomal snRNP assembly in the cytoplasm and is required for pre-mRNA splicing in the nucleus. It may also play a role in the metabolism of snoRNPs. Required in motor neurons and proprioceptive neurons to ensure correct U12 intron splicing and proper levels of tmem41b mRNA. Required for the maturation of motor neuron axonal branches and dendrites. The protein is Survival motor neuron protein 1 (smn1) of Danio rerio (Zebrafish).